The primary structure comprises 250 residues: tRNA (guanine-N(1)-)-methyltransferase (250 aa).

Residues G116 and 136–141 (IGDYVL) contribute to the S-adenosyl-L-methionine site.

The protein belongs to the RNA methyltransferase TrmD family. As to quaternary structure, homodimer.

It localises to the cytoplasm. It catalyses the reaction guanosine(37) in tRNA + S-adenosyl-L-methionine = N(1)-methylguanosine(37) in tRNA + S-adenosyl-L-homocysteine + H(+). In terms of biological role, specifically methylates guanosine-37 in various tRNAs. The polypeptide is tRNA (guanine-N(1)-)-methyltransferase (Pseudomonas savastanoi pv. phaseolicola (strain 1448A / Race 6) (Pseudomonas syringae pv. phaseolicola (strain 1448A / Race 6))).